Reading from the N-terminus, the 125-residue chain is Large ribosomal subunit protein bL12 (125 aa).

Belongs to the bacterial ribosomal protein bL12 family. As to quaternary structure, homodimer. Part of the ribosomal stalk of the 50S ribosomal subunit. Forms a multimeric L10(L12)X complex, where L10 forms an elongated spine to which 2 to 4 L12 dimers bind in a sequential fashion. Binds GTP-bound translation factors.

Its function is as follows. Forms part of the ribosomal stalk which helps the ribosome interact with GTP-bound translation factors. Is thus essential for accurate translation. The sequence is that of Large ribosomal subunit protein bL12 from Helicobacter pylori (strain HPAG1).